The primary structure comprises 133 residues: UPF0102 protein CYA_0680 (133 aa).

The protein belongs to the UPF0102 family.

The protein is UPF0102 protein CYA_0680 of Synechococcus sp. (strain JA-3-3Ab) (Cyanobacteria bacterium Yellowstone A-Prime).